A 333-amino-acid chain; its full sequence is MLLLPFQLLAVLFPGGNSEHAFQGPTSFHVIQTSSFTNSTWAQTQGSGWLDDLQIHGWDSDSGTAIFLKPWSKGNFSDKEVAELEEIFRVYIFGFAREVQDFAGDFQMKYPFEIQGIAGCELHSGGAIVSFLRGALGGLDFLSVKNASCVPSPEGGSRAQKFCALIIQYQGIMETVRILLYETCPRYLLGVLNAGKADLQRQVKPEAWLSSGPSPGPGRLQLVCHVSGFYPKPVWVMWMRGEQEQQGTQLGDILPNANWTWYLRATLDVADGEAAGLSCRVKHSSLEGQDIILYWRNPTSIGSIVLAIIVPSLLLLLCLALWYMRRRSYQNIP.

A signal peptide spans 1-17 (MLLLPFQLLAVLFPGGN). At 18–303 (SEHAFQGPTS…YWRNPTSIGS (286 aa)) the chain is on the extracellular side. N-linked (GlcNAc...) asparagine glycans are attached at residues Asn38, Asn75, and Asn146. 3 disulfide bridges follow: Cys120-Cys184, Cys149-Cys163, and Cys224-Cys279. Residues 185 to 295 (PRYLLGVLNA…LEGQDIILYW (111 aa)) enclose the Ig-like domain. The N-linked (GlcNAc...) asparagine glycan is linked to Asn258. The chain crosses the membrane as a helical span at residues 304–324 (IVLAIIVPSLLLLLCLALWYM). At 325–333 (RRRSYQNIP) the chain is on the cytoplasmic side. The Internalization signal signature appears at 329–332 (YQNI).

As to quaternary structure, heterodimer with B2M (beta-2-microglobulin). Interacts with saposin C. Expressed on cortical thymocytes, on certain T-cell leukemias, and in various other tissues.

The protein localises to the cell membrane. It localises to the endosome membrane. The protein resides in the lysosome membrane. Functionally, antigen-presenting protein that binds self and non-self lipid and glycolipid antigens and presents them to T-cell receptors on natural killer T-cells. The sequence is that of T-cell surface glycoprotein CD1b (CD1B) from Homo sapiens (Human).